Reading from the N-terminus, the 41-residue chain is Large ribosomal subunit protein bL36 (41 aa).

Belongs to the bacterial ribosomal protein bL36 family.

This is Large ribosomal subunit protein bL36 from Paracoccus denitrificans (strain Pd 1222).